A 391-amino-acid chain; its full sequence is Phosphoglycerate kinase (391 aa).

Residues 21–23 (DLN), R36, 59–62 (HLGR), R113, and R146 each bind substrate. Residues K197, E319, and 345 to 348 (GGDT) contribute to the ATP site.

It belongs to the phosphoglycerate kinase family. Monomer.

Its subcellular location is the cytoplasm. The catalysed reaction is (2R)-3-phosphoglycerate + ATP = (2R)-3-phospho-glyceroyl phosphate + ADP. Its pathway is carbohydrate degradation; glycolysis; pyruvate from D-glyceraldehyde 3-phosphate: step 2/5. This chain is Phosphoglycerate kinase, found in Shewanella denitrificans (strain OS217 / ATCC BAA-1090 / DSM 15013).